A 204-amino-acid chain; its full sequence is Protein Mis18-alpha (204 aa).

Residues S13, S16, and S17 each carry the phosphoserine modification. The Mis18 domain maps to 51 to 149 (PLVFLCARCR…SVEAVESYTL (99 aa)). 4 residues coordinate Zn(2+): C56, C59, C112, and C115. A Glycyl lysine isopeptide (Lys-Gly) (interchain with G-Cter in SUMO2) cross-link involves residue K133. Phosphoserine is present on S204.

Belongs to the mis18 family. Homodimer, and heterodimer with OIP5/MIS18B. Identified in a complex containing MIS18A, OIP5/MIS18B, MIS18BP1, RBBP7 and RBBP4.

Its subcellular location is the nucleus. The protein resides in the chromosome. The protein localises to the centromere. Its function is as follows. Required for recruitment of CENPA to centromeres and normal chromosome segregation during mitosis. This is Protein Mis18-alpha (Mis18a) from Mus musculus (Mouse).